A 312-amino-acid polypeptide reads, in one-letter code: Malate dehydrogenase (312 aa).

Residues 12–17 and Asp-36 each bind NAD(+); that span reads GAGFTG. 2 residues coordinate substrate: Arg-87 and Arg-93. NAD(+)-binding positions include Asn-100 and 123-125; that span reads LTN. Asn-125 contributes to the substrate binding site. A Phosphoserine modification is found at Ser-149. Arg-156 contributes to the substrate binding site. The active-site Proton acceptor is His-180.

Belongs to the LDH/MDH superfamily. MDH type 3 family.

It catalyses the reaction (S)-malate + NAD(+) = oxaloacetate + NADH + H(+). Functionally, catalyzes the reversible oxidation of malate to oxaloacetate. This chain is Malate dehydrogenase, found in Bacillus cytotoxicus (strain DSM 22905 / CIP 110041 / 391-98 / NVH 391-98).